A 278-amino-acid polypeptide reads, in one-letter code: Splicing factor YJU2 (278 aa).

Positions 51, 54, 88, and 91 each coordinate Zn(2+). Positions 228-278 are disordered; it reads HRQRTNKPGNNNDEKRTPLFNPTSTKGKIQKKSSVRTNPLGIVIKRGKSLK. 2 short sequence motifs (nuclear localization signal) span residues 242 to 258 and 260 to 278; these read KRTP…KIQK and SSVR…KSLK.

This sequence belongs to the CWC16 family. YJU2 subfamily. In terms of assembly, component of the spliceosome. Present in the activated B complex, the catalytically activated B* complex which catalyzes the branching, the catalytic step 1 C complex catalyzing the exon ligation, and the postcatalytic P complex containing the ligated exons (mRNA) and the excised lariat intron. Interacts (via C-terminus) with CLF1. Interacts (via N-terminus) with SYF1. Interacts with U2 snRNA; this interaction is direct. Identified in the CWC complex (or CEF1-associated complex), a spliceosome sub-complex reminiscent of a late-stage spliceosome composed of the U2, U5 and U6 snRNAs and at least BUD13, BUD31, BRR2, CDC40, CEF1, CLF1, CUS1, CWC2, CWC15, CWC21, CWC22, CWC23, CWC24, CWC25, CWC27, ECM2, HSH155, IST3, ISY1, LEA1, MSL1, NTC20, PRP8, PRP9, PRP11, PRP19, PRP21, PRP22, PRP45, PRP46, SLU7, SMB1, SMD1, SMD2, SMD3, SMX2, SMX3, SNT309, SNU114, SPP2, SYF1, SYF2, RSE1 and YJU2.

Its subcellular location is the nucleus. Part of the spliceosome which catalyzes two sequential transesterification reactions, first the excision of the non-coding intron from pre-mRNA and then the ligation of the coding exons to form the mature mRNA. Plays a role (via N-terminus) in stabilizing the structure of the spliceosome catalytic core and docking of the branch helix into the active site, producing 5'-exon and lariat intron-3'-intermediates. Further stabilizes spliceosome conformation for 3'-splice site docking (via C-terminus) promoting exon ligation. The polypeptide is Splicing factor YJU2 (Saccharomyces cerevisiae (strain ATCC 204508 / S288c) (Baker's yeast)).